A 727-amino-acid chain; its full sequence is Plakophilin-1 (727 aa).

The interval 1 to 235 (MNHSPLKTAL…SFSHSRASSK (235 aa)) is required for binding to single stranded DNA. The interval 1–287 (MNHSPLKTAL…ESAKQQVYQL (287 aa)) is required for interaction with EIF4A1. Position 4 is a phosphoserine (serine 4). A disordered region spans residues 48–69 (TVKRQKSKSSQSSTLSHSNRGS). Phosphorylation in this region is required for cytoplasmic localization and protein stabilization regions lie at residues 54 to 69 (SKSS…NRGS) and 117 to 192 (RFSS…STCS). Residues serine 119, serine 120, serine 122, and serine 143 each carry the phosphoserine modification. Residues 161–270 (YCDPRGTLRK…KCQAIGAYYI (110 aa)) form a required for WNT-mediated nuclear localization region. ARM repeat units lie at residues 244–275 (SGLT…HTCF), 276–317 (QDES…NLVF), 318–360 (RSTT…NLSS), 361–412 (TDEL…GCLR), 413–443 (NLSS…NCVA), 505–536 (NYDC…LNLM), 537–583 (GKSK…IARL), 584–629 (LQSG…SHTG), and 630–693 (NTSN…DMWS).

It belongs to the beta-catenin family. Part of a complex that contains DSG3, PKP1, YAP1 and YWHAG; the complex is required for localization of DSG3 and YAP1 to the cell membrane in keratinocytes. Interacts (via N-terminus) with KRT5/CK5, KRT8/CK8 (via rod domain), KRT15/CK15 and KRT18/CK18 (via rod domain) as part of intermediate filaments. Interacts with VIM (via rod domain). Interacts with DSP. Interacts with DES. Interacts with FXR1; the interaction may facilitate the binding of PKP1 to PKP2, PKP3 and DSP mRNA. Interacts (via N-terminus) with EIF4A1; the interaction promotes EIF4A1 recruitment to the cap-dependent translation complex and EIF4A1 ATPase activity. Interacts with TJP1/ZO-1; the interaction facilitates TJP1/ZO-1 localization to the plasma membrane. Interacts (when phosphorylated) with YWHAG; the interaction results in translocation of PKP1 to the cytoplasm and loss of intercellular adhesion in keratinocytes. In terms of processing, phosphorylated by AKT2; required for interaction with YWHAG and subsequent localization away from desmosomes to the cytoplasm. Phosphorylation of Ser-119 by AKT2 promotes PKP1-driven cap-dependent mRNA translation and decreases intercellular adhesion, phosphorylation is promoted by insulin. Phosphorylation by RIPK4 at the N-terminus is required for its role in differentiation of keratinocytes and DSG1 localization at cell junctions.

The protein localises to the nucleus. It is found in the cytoplasm. It localises to the perinuclear region. The protein resides in the cell junction. Its subcellular location is the desmosome. The protein localises to the cell membrane. It is found in the stress granule. Its function is as follows. A component of desmosome cell-cell junctions which are required for positive regulation of cellular adhesion. Plays a role in desmosome protein expression regulation and localization to the desmosomal plaque, thereby maintaining cell sheet integrity and anchorage of desmosomes to intermediate filaments. Required for localization of DSG3 and YAP1 to the cell membrane in keratinocytes in response to mechanical strain, via the formation of an interaction complex composed of DSG3, YAP1, PKP1 and YWHAG. Positively regulates differentiation of keratinocytes, potentially via promoting localization of DSG1 at desmosome cell junctions. Required for calcium-independent development and maturation of desmosome plaques specifically at lateral cell-cell contacts in differentiating keratinocytes. Plays a role in the maintenance of DSG3 protein abundance, DSG3 clustering and localization of these clusters to the cell membrane in keratinocytes. May also promote keratinocyte proliferation and morphogenesis during postnatal development. Required for tight junction inside-out transepidermal barrier function of the skin. Promotes Wnt-mediated proliferation and differentiation of ameloblasts, via facilitating TJP1/ZO-1 localization to tight junctions. Binds single-stranded DNA (ssDNA), and may thereby play a role in sensing DNA damage and promoting cell survival. Positively regulates cap-dependent translation and as a result cell proliferation, via recruitment of EIF4A1 to the initiation complex and promotion of EIF4A1 ATPase activity. Regulates the mRNA stability and protein abundance of desmosome components PKP2, PKP3, DSC2 and DSP, potentially via its interaction with FXR1. May facilitate the formation of intermediate filaments. This Bos taurus (Bovine) protein is Plakophilin-1 (PKP1).